Consider the following 99-residue polypeptide: Aspartyl/glutamyl-tRNA(Asn/Gln) amidotransferase subunit C (99 aa).

This sequence belongs to the GatC family. In terms of assembly, heterotrimer of A, B and C subunits.

The enzyme catalyses L-glutamyl-tRNA(Gln) + L-glutamine + ATP + H2O = L-glutaminyl-tRNA(Gln) + L-glutamate + ADP + phosphate + H(+). It carries out the reaction L-aspartyl-tRNA(Asn) + L-glutamine + ATP + H2O = L-asparaginyl-tRNA(Asn) + L-glutamate + ADP + phosphate + 2 H(+). In terms of biological role, allows the formation of correctly charged Asn-tRNA(Asn) or Gln-tRNA(Gln) through the transamidation of misacylated Asp-tRNA(Asn) or Glu-tRNA(Gln) in organisms which lack either or both of asparaginyl-tRNA or glutaminyl-tRNA synthetases. The reaction takes place in the presence of glutamine and ATP through an activated phospho-Asp-tRNA(Asn) or phospho-Glu-tRNA(Gln). This Paracidovorax citrulli (strain AAC00-1) (Acidovorax citrulli) protein is Aspartyl/glutamyl-tRNA(Asn/Gln) amidotransferase subunit C.